The sequence spans 666 residues: tRNA 5-methylaminomethyl-2-thiouridine biosynthesis bifunctional protein MnmC (666 aa).

The interval 1 to 245 is tRNA (mnm(5)s(2)U34)-methyltransferase; sequence MKQYAIQPAN…KREMLCGVMA (245 aa). The FAD-dependent cmnm(5)s(2)U34 oxidoreductase stretch occupies residues 270-666; that stretch reads IGGGIASALL…RKLLKGKAVK (397 aa).

It in the N-terminal section; belongs to the methyltransferase superfamily. tRNA (mnm(5)s(2)U34)-methyltransferase family. This sequence in the C-terminal section; belongs to the DAO family. It depends on FAD as a cofactor.

Its subcellular location is the cytoplasm. The catalysed reaction is 5-aminomethyl-2-thiouridine(34) in tRNA + S-adenosyl-L-methionine = 5-methylaminomethyl-2-thiouridine(34) in tRNA + S-adenosyl-L-homocysteine + H(+). Catalyzes the last two steps in the biosynthesis of 5-methylaminomethyl-2-thiouridine (mnm(5)s(2)U) at the wobble position (U34) in tRNA. Catalyzes the FAD-dependent demodification of cmnm(5)s(2)U34 to nm(5)s(2)U34, followed by the transfer of a methyl group from S-adenosyl-L-methionine to nm(5)s(2)U34, to form mnm(5)s(2)U34. The polypeptide is tRNA 5-methylaminomethyl-2-thiouridine biosynthesis bifunctional protein MnmC (Citrobacter koseri (strain ATCC BAA-895 / CDC 4225-83 / SGSC4696)).